We begin with the raw amino-acid sequence, 380 residues long: 1-deoxy-D-xylulose 5-phosphate reductoisomerase (380 aa).

The NADPH site is built by T10, G11, S12, I13, G36, R37, N38, and N120. K121 provides a ligand contact to 1-deoxy-D-xylulose 5-phosphate. NADPH is bound at residue E122. Residue D146 participates in Mn(2+) binding. 1-deoxy-D-xylulose 5-phosphate is bound by residues S147, E148, S172, and H195. Mn(2+) is bound at residue E148. G201 provides a ligand contact to NADPH. 1-deoxy-D-xylulose 5-phosphate-binding residues include S208, N213, K214, and E217. E217 contacts Mn(2+).

Belongs to the DXR family. Mg(2+) is required as a cofactor. It depends on Mn(2+) as a cofactor.

It catalyses the reaction 2-C-methyl-D-erythritol 4-phosphate + NADP(+) = 1-deoxy-D-xylulose 5-phosphate + NADPH + H(+). It participates in isoprenoid biosynthesis; isopentenyl diphosphate biosynthesis via DXP pathway; isopentenyl diphosphate from 1-deoxy-D-xylulose 5-phosphate: step 1/6. In terms of biological role, catalyzes the NADPH-dependent rearrangement and reduction of 1-deoxy-D-xylulose-5-phosphate (DXP) to 2-C-methyl-D-erythritol 4-phosphate (MEP). The sequence is that of 1-deoxy-D-xylulose 5-phosphate reductoisomerase from Listeria monocytogenes serotype 4a (strain HCC23).